A 219-amino-acid chain; its full sequence is Cytidylate kinase (219 aa).

10–18 (GPAAAGKST) contacts ATP.

It belongs to the cytidylate kinase family. Type 1 subfamily.

Its subcellular location is the cytoplasm. It catalyses the reaction CMP + ATP = CDP + ADP. The catalysed reaction is dCMP + ATP = dCDP + ADP. The chain is Cytidylate kinase from Staphylococcus aureus (strain bovine RF122 / ET3-1).